The sequence spans 412 residues: Lipoyl synthase, mitochondrial (412 aa).

A mitochondrion-targeting transit peptide spans M1–F28. [4Fe-4S] cluster contacts are provided by C124, C129, C135, C155, C159, C162, and S372. The Radical SAM core domain occupies G138–L361.

It belongs to the radical SAM superfamily. Lipoyl synthase family. It depends on [4Fe-4S] cluster as a cofactor.

The protein localises to the mitochondrion. The catalysed reaction is [[Fe-S] cluster scaffold protein carrying a second [4Fe-4S](2+) cluster] + N(6)-octanoyl-L-lysyl-[protein] + 2 oxidized [2Fe-2S]-[ferredoxin] + 2 S-adenosyl-L-methionine + 4 H(+) = [[Fe-S] cluster scaffold protein] + N(6)-[(R)-dihydrolipoyl]-L-lysyl-[protein] + 4 Fe(3+) + 2 hydrogen sulfide + 2 5'-deoxyadenosine + 2 L-methionine + 2 reduced [2Fe-2S]-[ferredoxin]. It functions in the pathway protein modification; protein lipoylation via endogenous pathway; protein N(6)-(lipoyl)lysine from octanoyl-[acyl-carrier-protein]: step 2/2. Functionally, catalyzes the radical-mediated insertion of two sulfur atoms into the C-6 and C-8 positions of the octanoyl moiety bound to the lipoyl domains of lipoate-dependent enzymes, thereby converting the octanoylated domains into lipoylated derivatives. The protein is Lipoyl synthase, mitochondrial of Fusarium vanettenii (strain ATCC MYA-4622 / CBS 123669 / FGSC 9596 / NRRL 45880 / 77-13-4) (Fusarium solani subsp. pisi).